Here is a 413-residue protein sequence, read N- to C-terminus: Histidine--tRNA ligase (413 aa).

This sequence belongs to the class-II aminoacyl-tRNA synthetase family. In terms of assembly, homodimer.

It is found in the cytoplasm. The enzyme catalyses tRNA(His) + L-histidine + ATP = L-histidyl-tRNA(His) + AMP + diphosphate + H(+). The protein is Histidine--tRNA ligase of Geobacter metallireducens (strain ATCC 53774 / DSM 7210 / GS-15).